Consider the following 361-residue polypeptide: MSLLPETKLDVLLAHHASLENQLQSQVGADTYVKLMRELAELNPLIEAVKAYRQVGAERGEIDALLADAATDAEMRAMAEAEHAALEAQEAELAQQIRVALLPKDAMDDRNVMLEIRAGTGGDEASLFAGDLFRMYEKFAVLQGWSVEVVSASEGTMGGYKEIIAEVKGRGAFAKLKFESGVHRVQRVPDTETQGRIHTSAATVAVLPEVEEVDVDIKPDDLRIETMRAQGAGGQHVNKTESAIRITHIPTGLQVMMQDSRSQHKNRASAMNILRSRIYDAEQQRIDSVRSAERKEKVGSGDRSERIRTYNFPQGRVTDHRINLTLYKLPQVIAGEALGELIDALTTEHQAAQLAAQGNAA.

At Gln-235 the chain carries N5-methylglutamine.

Belongs to the prokaryotic/mitochondrial release factor family. Methylated by PrmC. Methylation increases the termination efficiency of RF1.

Its subcellular location is the cytoplasm. Its function is as follows. Peptide chain release factor 1 directs the termination of translation in response to the peptide chain termination codons UAG and UAA. The protein is Peptide chain release factor 1 of Rhodopseudomonas palustris (strain BisB18).